The sequence spans 244 residues: Carboxy-S-adenosyl-L-methionine synthase (244 aa).

S-adenosyl-L-methionine-binding positions include Tyr40, 65–67 (GCS), 90–91 (DN), 119–120 (DI), Asn134, and Arg201.

It belongs to the class I-like SAM-binding methyltransferase superfamily. Cx-SAM synthase family. Homodimer.

The enzyme catalyses prephenate + S-adenosyl-L-methionine = carboxy-S-adenosyl-L-methionine + 3-phenylpyruvate + H2O. Catalyzes the conversion of S-adenosyl-L-methionine (SAM) to carboxy-S-adenosyl-L-methionine (Cx-SAM). This is Carboxy-S-adenosyl-L-methionine synthase from Geobacter sp. (strain M21).